The sequence spans 272 residues: Small ribosomal subunit protein uS2 (272 aa).

The segment at glutamate 244–glutamate 272 is disordered.

It belongs to the universal ribosomal protein uS2 family.

The protein is Small ribosomal subunit protein uS2 of Trichodesmium erythraeum (strain IMS101).